Consider the following 255-residue polypeptide: MRGRVKNYILEKIREHGAIHMTLIDPEKTTPEVAARIAREVAEAGTSAIMVGGSIGVSEAMTDEVVLAIKRSTEVPVILFPGSPTALSRHADAVWFLSVLNSQNPYFITGAQMQGAPIVKRYGLEVLPLGYIIVGEGGAVSIVSYTRPLPFAKPEVVAAYALAAEYMGFQFVYLEGGSGGEPVPPKIVKMVKGVTTLPLIVGGGIRSPEVAKELAKAGADIIVTGTIVEESENIRETIGRIVRATREGALERSRE.

Positions 25 and 54 each coordinate Mg(2+). Residues 173–179 (YLEGGSG), 203–204 (GG), and 225–226 (GT) each bind sn-glycerol 1-phosphate.

This sequence belongs to the GGGP/HepGP synthase family. Group II subfamily. Mg(2+) is required as a cofactor.

It is found in the cytoplasm. It catalyses the reaction sn-glycerol 1-phosphate + (2E,6E,10E)-geranylgeranyl diphosphate = sn-3-O-(geranylgeranyl)glycerol 1-phosphate + diphosphate. Its pathway is membrane lipid metabolism; glycerophospholipid metabolism. In terms of biological role, prenyltransferase that catalyzes the transfer of the geranylgeranyl moiety of geranylgeranyl diphosphate (GGPP) to the C3 hydroxyl of sn-glycerol-1-phosphate (G1P). This reaction is the first ether-bond-formation step in the biosynthesis of archaeal membrane lipids. The polypeptide is Geranylgeranylglyceryl phosphate synthase (Thermofilum pendens (strain DSM 2475 / Hrk 5)).